Reading from the N-terminus, the 208-residue chain is Thymidylate kinase (208 aa).

10 to 17 (GPEGSGKT) contacts ATP.

This sequence belongs to the thymidylate kinase family.

It catalyses the reaction dTMP + ATP = dTDP + ADP. Phosphorylation of dTMP to form dTDP in both de novo and salvage pathways of dTTP synthesis. The protein is Thymidylate kinase of Bacillus cereus (strain B4264).